The chain runs to 375 residues: Alanine racemase (375 aa).

Lys40 functions as the Proton acceptor; specific for D-alanine in the catalytic mechanism. The residue at position 40 (Lys40) is an N6-(pyridoxal phosphate)lysine. Arg140 lines the substrate pocket. The active-site Proton acceptor; specific for L-alanine is Tyr268. Met315 lines the substrate pocket.

It belongs to the alanine racemase family. Pyridoxal 5'-phosphate serves as cofactor.

It catalyses the reaction L-alanine = D-alanine. Its pathway is amino-acid biosynthesis; D-alanine biosynthesis; D-alanine from L-alanine: step 1/1. In terms of biological role, catalyzes the interconversion of L-alanine and D-alanine. May also act on other amino acids. This chain is Alanine racemase (alr), found in Limosilactobacillus reuteri (strain DSM 20016) (Lactobacillus reuteri).